The following is a 356-amino-acid chain: uncharacterized protein (356 aa).

The next 6 membrane-spanning stretches (helical) occupy residues 2–22 (FEAF…FHRL), 35–55 (AYVT…PIPY), 74–94 (FTNM…EIVV), 99–119 (IMYG…GPFL), 124–144 (VLSL…VALV), and 154–174 (IILI…FVDI). Positions 218–353 (QSIALLLIDI…GRNKVMFNPI (136 aa)) constitute a GGDEF domain.

Its subcellular location is the cell membrane. This is an uncharacterized protein from Staphylococcus aureus (strain bovine RF122 / ET3-1).